The primary structure comprises 165 residues: Cyclic pyranopterin monophosphate synthase (165 aa).

Residues L76–H78 and M114–E115 each bind substrate. D129 is an active-site residue.

It belongs to the MoaC family. Homohexamer; trimer of dimers.

It catalyses the reaction (8S)-3',8-cyclo-7,8-dihydroguanosine 5'-triphosphate = cyclic pyranopterin phosphate + diphosphate. Its pathway is cofactor biosynthesis; molybdopterin biosynthesis. Its function is as follows. Catalyzes the conversion of (8S)-3',8-cyclo-7,8-dihydroguanosine 5'-triphosphate to cyclic pyranopterin monophosphate (cPMP). This Brucella canis (strain ATCC 23365 / NCTC 10854 / RM-666) protein is Cyclic pyranopterin monophosphate synthase.